The sequence spans 387 residues: Probable serine protease FE772_23060 (387 aa).

The protein belongs to the peptidase S1 family.

Functionally, possibly a dedicated protease for substrate gasdermin bGSDM; cleaves the bGSDM precursor, releasing the pore-forming moiety, which integrates into the membrane and triggers cell death. Involved in defense against bacteriophages. When this probable 4 gene operon (bGSDM-FE772_23060-FE772_23065-FE772_23070) is inserted into E.coli it provides nearly 100-fold protection against phages T5 and T6 and about 8-fold against phage T4. The operon without bGSDM no longer protects against phage. This is Probable serine protease FE772_23060 from Lysobacter enzymogenes.